Reading from the N-terminus, the 401-residue chain is Deubiquitinase and deneddylase Dub1 (401 aa).

Over residues 1–11 (MLSPTNSTSKT) the composition is skewed to polar residues. The tract at residues 1-24 (MLSPTNSTSKTAPVPPRDSSKPVL) is disordered. A helical membrane pass occupies residues 40–60 (TALAVLLVVVTLGLILLFYSF). Residues 77 to 130 (KEQPTISIPVPLPSPPLAVPRPSTPPPPVISRPSTPSAPKPSTPPPLLPKAPKP) are disordered. Positions 86–128 (VPLPSPPLAVPRPSTPPPPVISRPSTPSAPKPSTPPPLLPKAP) are enriched in pro residues. Active-site residues include His-275, Asp-292, and Cys-345.

This sequence belongs to the peptidase C48 family. Binds to host NFKBIA.

It localises to the secreted. The protein localises to the host cell. It is found in the membrane. Effector proteins function to alter host cell physiology and promote bacterial survival in host tissues. This protease possesses deubiquitinating and deneddylating activities. Impairs ubiquitination and degradation of NF-kappa-B inhibitor alpha (NFKBIA), thereby preventing NF-kappa-B activation. The polypeptide is Deubiquitinase and deneddylase Dub1 (cdu1) (Chlamydia trachomatis serovar L2 (strain ATCC VR-902B / DSM 19102 / 434/Bu)).